The primary structure comprises 202 residues: FMN-dependent NADH:quinone oxidoreductase (202 aa).

Residues S10, 16-18 (SAS), and 96-99 (MWNF) contribute to the FMN site.

This sequence belongs to the azoreductase type 1 family. In terms of assembly, homodimer. It depends on FMN as a cofactor.

It catalyses the reaction 2 a quinone + NADH + H(+) = 2 a 1,4-benzosemiquinone + NAD(+). It carries out the reaction N,N-dimethyl-1,4-phenylenediamine + anthranilate + 2 NAD(+) = 2-(4-dimethylaminophenyl)diazenylbenzoate + 2 NADH + 2 H(+). Quinone reductase that provides resistance to thiol-specific stress caused by electrophilic quinones. Functionally, also exhibits azoreductase activity. Catalyzes the reductive cleavage of the azo bond in aromatic azo compounds to the corresponding amines. In Beijerinckia indica subsp. indica (strain ATCC 9039 / DSM 1715 / NCIMB 8712), this protein is FMN-dependent NADH:quinone oxidoreductase.